A 578-amino-acid chain; its full sequence is Polymerase acidic protein (578 aa).

The RNA polymerase is composed of three subunits: PB1, PB2 and PA. Post-translationally, phosphorylated on serines and threonines by host kinases.

Its function is as follows. Implicated in endonuclease cleavage of capped RNA primers. Displays an elongation factor activity in viral RNA synthesis. Dispensable for viral transcription, but not replication. The chain is Polymerase acidic protein from Infectious salmon anemia virus (isolate Atlantic salmon/Norway/810/9/99) (ISAV).